We begin with the raw amino-acid sequence, 458 residues long: Argininosuccinate lyase (458 aa).

Belongs to the lyase 1 family. Argininosuccinate lyase subfamily.

It localises to the cytoplasm. The enzyme catalyses 2-(N(omega)-L-arginino)succinate = fumarate + L-arginine. The protein operates within amino-acid biosynthesis; L-arginine biosynthesis; L-arginine from L-ornithine and carbamoyl phosphate: step 3/3. The protein is Argininosuccinate lyase of Geotalea daltonii (strain DSM 22248 / JCM 15807 / FRC-32) (Geobacter daltonii).